The chain runs to 938 residues: Chaperone protein ClpD1, chloroplastic (938 aa).

A chloroplast-targeting transit peptide spans 1–83; sequence MEVCCCSTSS…FERFTERAVK (83 aa). 2 repeat regions span residues 84 to 145 and 159 to 224; these read AVVL…TPGA and FSGS…LQAE. The 141-residue stretch at 84-224 folds into the Clp R domain; that stretch reads AVVLSQREAK…SVALTRLQAE (141 aa). The disordered stretch occupies residues 234–255; the sequence is GASSFKVPKKSPAGAGRSAFSK. Residues 266-519 form an i region; the sequence is LDQFCLDLTT…RMESFNRKKE (254 aa). ATP is bound by residues 311–318 and 660–667; these read GEAGVGKT and GPTGVGKT. The tract at residues 586-777 is II; it reads VGTEEIARVA…LIVMTSNIGS (192 aa).

This sequence belongs to the ClpA/ClpB family. ClpD subfamily. In terms of tissue distribution, expressed in stems, culms and leaves.

It localises to the plastid. It is found in the chloroplast. In terms of biological role, molecular chaperone that may function in heat stress response. May interact with a ClpP-like protease involved in degradation of denatured proteins in the chloroplast. Chaperone involved in response to abiotic stresses. Plays a positive role during dehydration and salt stress. The polypeptide is Chaperone protein ClpD1, chloroplastic (Oryza sativa subsp. japonica (Rice)).